The chain runs to 193 residues: Peptide deformylase (193 aa).

Fe cation-binding residues include cysteine 111 and histidine 155. Glutamate 156 is a catalytic residue. Histidine 159 lines the Fe cation pocket.

The protein belongs to the polypeptide deformylase family. Fe(2+) serves as cofactor.

The catalysed reaction is N-terminal N-formyl-L-methionyl-[peptide] + H2O = N-terminal L-methionyl-[peptide] + formate. Its function is as follows. Removes the formyl group from the N-terminal Met of newly synthesized proteins. Requires at least a dipeptide for an efficient rate of reaction. N-terminal L-methionine is a prerequisite for activity but the enzyme has broad specificity at other positions. The protein is Peptide deformylase of Mycoplasma genitalium (strain ATCC 33530 / DSM 19775 / NCTC 10195 / G37) (Mycoplasmoides genitalium).